A 375-amino-acid chain; its full sequence is DNA replication and repair protein RecF (375 aa).

An ATP-binding site is contributed by 30-37 (GNNAQGKS).

The protein belongs to the RecF family.

The protein resides in the cytoplasm. The RecF protein is involved in DNA metabolism; it is required for DNA replication and normal SOS inducibility. RecF binds preferentially to single-stranded, linear DNA. It also seems to bind ATP. This is DNA replication and repair protein RecF from Microcystis aeruginosa (strain NIES-843 / IAM M-2473).